The following is a 266-amino-acid chain: Very-long-chain aldehyde decarbonylase GL1-11 (266 aa).

The next 4 membrane-spanning stretches (helical) occupy residues 25 to 45, 74 to 94, 106 to 126, and 163 to 183; these read VVTFLLHETVFFLSGLPSLLF, ILYHVCVNLPVMVLSYPAFKF, WTVIVSQVLFYFVLEDFIFYW, and ILFLGFATIVGPALTGPHLFT. Positions 113-248 constitute a Fatty acid hydroxylase domain; sequence VLFYFVLEDF…FVYMDWLFGT (136 aa).

Belongs to the sterol desaturase family. As to quaternary structure, homodimer.

The protein resides in the endoplasmic reticulum membrane. It carries out the reaction a long-chain fatty aldehyde + 2 NADPH + O2 + H(+) = a long-chain alkane + formate + 2 NADP(+) + H2O. In terms of biological role, aldehyde decarbonylase involved in the conversion of aldehydes to alkanes. Core component of a very-long-chain alkane synthesis complex. In Oryza sativa subsp. indica (Rice), this protein is Very-long-chain aldehyde decarbonylase GL1-11.